Consider the following 62-residue polypeptide: Trypsin inhibitor MCI-3 (62 aa).

This sequence belongs to the protease inhibitor I13 (potato type I serine protease inhibitor) family.

The chain is Trypsin inhibitor MCI-3 from Momordica charantia (Bitter gourd).